The following is a 793-amino-acid chain: Protein zer-1 homolog (793 aa).

LRR repeat units lie at residues 84–108 (RTSLKIVNLRNSTLSSIGLETLMRH), 187–210 (LHDLGHLDLTSCVLANFSLEALGS), and 269–294 (LRHLTHLDISGTNLAGNGVATKESTT).

It belongs to the zyg-11 family.

Functionally, serves as substrate adapter subunit in an E3 ubiquitin ligase complex CG12084-cul-2-elongin BC. Targets substrates bearing N-terminal glycine degrons for proteasomal degradation. The chain is Protein zer-1 homolog from Drosophila melanogaster (Fruit fly).